Reading from the N-terminus, the 356-residue chain is Rhomboid-related protein 1 (356 aa).

The next 7 membrane-spanning stretches (helical) occupy residues 107 to 129 (WCPPPIFMLLITIIQVGIFFFYW), 172 to 194 (YMFLHAGLNHLLGNVIIQLLVGI), 201 to 223 (KIWRIGPIYLLAVTSGSLLQYAI), 227 to 249 (SLLVGASAGVYALIFAHVANVIL), 256 to 275 (LRWIRVLVLFVFIFLDFGGA), 290 to 312 (HLAHIAGAVTGLFFGYVVLYNVV), and 319 to 341 (IIRYVCLFLYSAFFATTIIFVIV). S233 functions as the Nucleophile in the catalytic mechanism. H293 is an active-site residue.

This sequence belongs to the peptidase S54 family.

Its subcellular location is the membrane. The enzyme catalyses Cleaves type-1 transmembrane domains using a catalytic dyad composed of serine and histidine that are contributed by different transmembrane domains.. Serine protease which activates lin-3 isoform a in the proximal vulva precursor cells (VPC) during vulva development to transmit the inductive anchor cell signal to the distal VPCs. This chain is Rhomboid-related protein 1, found in Caenorhabditis elegans.